The sequence spans 373 residues: Diels-Alderase (373 aa).

The protein belongs to the Diels-Alderase family.

It catalyses the reaction (5S)-3-[(2E,6R,8E,10E,12E)-2,6-dimethyltetradeca-2,8,10,12-tetraenoyl]-5-(hydroxymethyl)pyrrolidine-2,4-dione = trichosetin. Its pathway is mycotoxin biosynthesis. Functionally, hybrid PKS-NRPS synthetase; part of the gene cluster that mediates the biosynthesis of trichosetin, a trans-fused decalin-containing tetramic acid with antimicrobial activity. The PKS module of PKS-NRPS1 together with the enoylreductase (ER) catalyze the formation of the polyketide unit which is then conjugated to L-serine by the condensation domain of the PKS-NRPS1 NRPS module. Activity of the Dieckmann cyclase domain (RED) results in release of the Dieckmann product intermediate. Diels-Alderase (DA) is involved in endo-selective Diels-Alder cycloaddition to form the decalin ring, leading to the production of N-desmethylequisetin also called trichosetin. The cluster does not contain the equisetin N-methyltransferase and consequently, trichosetin is isolated as final product. This is Diels-Alderase from Gibberella fujikuroi (strain CBS 195.34 / IMI 58289 / NRRL A-6831) (Bakanae and foot rot disease fungus).